A 41-amino-acid polypeptide reads, in one-letter code: Large ribosomal subunit protein bL36B (41 aa).

The protein belongs to the bacterial ribosomal protein bL36 family.

The protein is Large ribosomal subunit protein bL36B of Haemophilus ducreyi (strain 35000HP / ATCC 700724).